Consider the following 298-residue polypeptide: Replication protein A 32 kDa subunit B (298 aa).

Residues 89-163 constitute a DNA-binding region (OB); the sequence is VRLVGRMLNK…QVVAYSVRRI (75 aa).

Belongs to the replication factor A protein 2 family. Heterotrimer of RPA1, RPA2 and RPA3 (canonical replication protein A complex). Interacts with RPA1A and RPA3. Phosphorylated in a cell-cycle-dependent manner (from the S phase until mitosis). In response to DNA damage, recruited to DNA-repair nuclear foci, as a hypophosphorylated form.

The protein localises to the nucleus. Component of the replication protein A complex (RPA) required for DNA recombination, repair and replication. The activity of RPA is mediated by single-stranded DNA binding and protein interactions. The polypeptide is Replication protein A 32 kDa subunit B (RPA2B) (Oryza sativa subsp. japonica (Rice)).